Consider the following 769-residue polypeptide: Serine/threonine-protein kinase PLK4 (769 aa).

One can recognise a Protein kinase domain in the interval 14-267; the sequence is YEVQHLLGKG…LEAVLCHPFM (254 aa). ATP contacts are provided by residues 20 to 28 and Lys-43; that span reads LGKGGFATV. Asp-138 serves as the catalytic Proton acceptor. The region spanning 381–498 is the Cryptic POLO box 1 (CPB1) domain; sequence EDRISVPPLN…ARFVGLVKSK (118 aa). One can recognise a Cryptic POLO box 2 (CPB2) domain in the interval 499–602; that stretch reads TPKVTYFSTL…GRRPITDVQP (104 aa). The POLO box domain maps to 660-739; the sequence is PIKRINVPEI…IPNIQLKLKT (80 aa).

It belongs to the protein kinase superfamily. Ser/Thr protein kinase family. CDC5/Polo subfamily. In terms of assembly, homodimer. Interacts with Alms1a. In terms of processing, ubiquitinated by the SCF-slmb ubiquitin ligase complex; leading to its degradation by the proteasome during interphase and regulating centriole number and ensuring the block to centriole reduplication. Expressed in testis (at protein level).

It localises to the cytoplasm. It is found in the cytoskeleton. The protein resides in the microtubule organizing center. Its subcellular location is the centrosome. The protein localises to the centriole. It catalyses the reaction L-seryl-[protein] + ATP = O-phospho-L-seryl-[protein] + ADP + H(+). The catalysed reaction is L-threonyl-[protein] + ATP = O-phospho-L-threonyl-[protein] + ADP + H(+). Functionally, serine/threonine-protein kinase that plays a central role in centriole duplication. Able to trigger procentriole formation on the surface of the mother centriole cylinder, using mother centriole as a platform, leading to the recruitment of centriole biogenesis proteins such as Sas-6. When overexpressed, it is able to induce centrosome amplification through the simultaneous generation of multiple procentrioles adjoining each parental centriole during S phase. Centrosome amplification following overexpression can initiate tumorigenesis, highlighting the importance of centrosome regulation in cancers. The polypeptide is Serine/threonine-protein kinase PLK4 (SAK) (Drosophila melanogaster (Fruit fly)).